Here is a 336-residue protein sequence, read N- to C-terminus: Cellodextrinase A (336 aa).

Glu141 serves as the catalytic Proton donor.

Belongs to the glycosyl hydrolase 5 (cellulase A) family.

The protein resides in the secreted. Its function is as follows. Crystalline cellulose degradation. The polypeptide is Cellodextrinase A (celA) (Ruminococcus flavefaciens).